The chain runs to 207 residues: Transcription factor DYT1 (207 aa).

The segment at 1 to 38 (MGGGSRFQEPVRMSRRKQVTKEKEEDENFKSPNLEAER) is disordered. Residues 28–77 (NFKSPNLEAERRRREKLHCRLMALRSHVPIVTNMTKASIVEDAITYIGEL) form the bHLH domain.

In terms of assembly, homodimer. Mostly expressed in anthers, and, to a lower extent, in young inflorescences undergoing meiosis and siliques.

Its subcellular location is the nucleus. In terms of biological role, transcription factor. Involved in the control of tapetum development. Required for male fertility and pollen differentiation, especially during callose deposition. This chain is Transcription factor DYT1, found in Arabidopsis thaliana (Mouse-ear cress).